The sequence spans 437 residues: Enolase (437 aa).

Gln-162 is a (2R)-2-phosphoglycerate binding site. Glu-204 functions as the Proton donor in the catalytic mechanism. Mg(2+)-binding residues include Asp-251, Glu-297, and Asp-324. (2R)-2-phosphoglycerate is bound by residues Lys-349, Arg-378, Ser-379, and Lys-400. Residue Lys-349 is the Proton acceptor of the active site.

The protein belongs to the enolase family. The cofactor is Mg(2+).

The protein resides in the cytoplasm. Its subcellular location is the secreted. It localises to the cell surface. It catalyses the reaction (2R)-2-phosphoglycerate = phosphoenolpyruvate + H2O. Its pathway is carbohydrate degradation; glycolysis; pyruvate from D-glyceraldehyde 3-phosphate: step 4/5. Its function is as follows. Catalyzes the reversible conversion of 2-phosphoglycerate (2-PG) into phosphoenolpyruvate (PEP). It is essential for the degradation of carbohydrates via glycolysis. The polypeptide is Enolase (Chlorobium phaeobacteroides (strain DSM 266 / SMG 266 / 2430)).